Consider the following 416-residue polypeptide: Thyroid hormone receptor alpha (416 aa).

Residues 1–30 are disordered; sequence MEPISNVEDPNSSEGDEKRWPDGPKRKRKN. The modulating stretch occupies residues 1 to 58; sequence MEPISNVEDPNSSEGDEKRWPDGPKRKRKNSTCSVKSMSALSLSVQGYIPSYLEKDEP. Residues 15–24 show a composition bias toward basic and acidic residues; the sequence is GDEKRWPDGP. Zn(2+)-binding residues include Cys59, Cys62, Cys76, Cys79, Cys97, Cys103, Cys113, and Cys116. 2 consecutive NR C4-type zinc fingers follow at residues 59 to 79 and 97 to 121; these read CVVC…CEGC and CKYD…FRKC. Positions 59–133 form a DNA-binding region, nuclear receptor; the sequence is CVVCGDKATG…VCMAMDLVLD (75 aa). The NR LBD domain occupies 169–413; sequence SEWELIRHVT…PPLFLEVFED (245 aa). 3,3',5-triiodo-L-thyronine contacts are provided by Arg234 and Ser283.

This sequence belongs to the nuclear hormone receptor family. NR1 subfamily.

Its subcellular location is the nucleus. In terms of biological role, nuclear hormone receptor that can act as a repressor or activator of transcription. High affinity receptor for thyroid hormones, including triiodothyronine and thyroxine. This chain is Thyroid hormone receptor alpha (thra1), found in Salmo salar (Atlantic salmon).